We begin with the raw amino-acid sequence, 178 residues long: Large ribosomal subunit protein eL20y (178 aa).

It belongs to the eukaryotic ribosomal protein eL20 family.

The protein is Large ribosomal subunit protein eL20y (RPL18AB) of Arabidopsis thaliana (Mouse-ear cress).